A 313-amino-acid chain; its full sequence is Protein TIC 22-like, chloroplastic (313 aa).

Residues 1–96 (MNSNIFPPSK…RISDDGGGAR (96 aa)) constitute a chloroplast transit peptide.

The protein belongs to the Tic22 family.

It is found in the plastid. Its subcellular location is the chloroplast intermembrane space. In terms of biological role, involved in protein precursor import into chloroplasts. The sequence is that of Protein TIC 22-like, chloroplastic (TIC22L) from Arabidopsis thaliana (Mouse-ear cress).